Consider the following 1235-residue polypeptide: MSDDEYGDIDAAVWDEAEALTQASQTLPSNFPHRRKRRRIGSEELDDGFLSGRRRGSHGFSRSDNDEADEKKSKYRIHLGAEEVPAAVIMGATQADEMPDSSPYRIRGPIYKRPRRSPPMELEQKSSPAQPSMVESAKTQKQNIVHSPQPTAQYDFSRELEDLPSDAFSPSPPQLRMSSIPITISSSPPLESTQSVRSQRLAAPQNGLRQTTLFGGRAPNQVPSSTQAKKVHKYLVDKVPEPPTHHTLDEEAIKTWIYPNNLGAERRYQYTIVHKGLFNNLLVALPTGLGKTFIAATIMLNFFRWTTDSQIVFMAPTKPLVSQQVKACFEIAGIPRSSTTMLTGDQSPALRAEEWAEKRVFFMTPQTVENDLKTGIADPKKIALIVVDEAHRATGNYAYTKVVQFLRRFNESFRVLALTATPGSSVEAVQEVIDNLEIAEVEIRTEDSIDIKEYVHRRDITEILIDPSDEIIMIRELFSKALQPLVNLLCSQKAYYNKDPMGLTQYGMLTARKAWMASGAGKSAQMSIKGMMNALFTVLTSMGHAIKLLNFHGIGPFFSNIKDFRAEVEGNKKGGKYKNQIVNSPEFKKMMERIQGWINKEDFIGHPKLTYLCDTVLNHFLDAGAGLMGDNMPPSSTRVIVFTEYRDSAEDIARVLNKHGPMIRASVFVGQSDSKRSEGMNQEKQLETIRKFKAGGINVIVATSIGEEGLDIGEVDLIVCYDSSSSPIRMLQRMGRTGRKRAGKIVLLLMRGKEEDSYKKSKDNYEQIQRMISSGSRFTFRHDLSARIIPRKVKPEVDKRFIEIPLENTQDPSLPEPKRRAKPRKKLAKKFHMPDGVETGFRKASKLNSNAESPLTKFGIKRKPSELNDDELAPVPLLDSVLLNAKDEAEHSRRFLKVPDGALEEVGMPDLTAQPITQRTLTRTAKVSHGKYTRSCVSLFNKLSRLQRPEDRDNKPYGDEPPSDFGSIPTMPLEAEVRARAPKAPKASDPAQVVKASRVAKTTSALKKAPASKRVAPKKAKPRRGRALRNDNSDSEDSTASMAMVSNLRSSQIPQPTPDSDEEGPGERVDRTSDMEELEADDDSDLGSLVDFIDPTQTQTQIPLTGTSNFSSSPPLMETWEDERINGNAVGGRRGMLPRAVEMTGAKNSSFKNGTMTQESSDGGDSMDSDFPTIEDLVRSDTTTTTTRKIADPPSSSVFSSGQKATPNMFTRKRDGDVRGRGLKRRVVESDDSDE.

2 disordered regions span residues 20 to 78 and 96 to 148; these read LTQA…YRIH and DEMP…VHSP. Positions 61 to 72 are enriched in basic and acidic residues; sequence SRSDNDEADEKK. Over residues 137 to 148 the composition is skewed to polar residues; it reads AKTQKQNIVHSP. Residues 272–440 enclose the Helicase ATP-binding domain; it reads IVHKGLFNNL…EVIDNLEIAE (169 aa). 285-292 contacts ATP; that stretch reads LPTGLGKT. Positions 388–391 match the DEAH box motif; sequence DEAH. The region spanning 608–784 is the Helicase C-terminal domain; that stretch reads KLTYLCDTVL…GSRFTFRHDL (177 aa). Disordered stretches follow at residues 808–827, 944–1117, and 1144–1235; these read NTQD…RKKL, SRLQ…PPLM, and TGAK…DSDE. Basic and acidic residues predominate over residues 947–958; the sequence is QRPEDRDNKPYG. Residues 1015–1027 show a composition bias toward basic residues; it reads VAPKKAKPRRGRA. The span at 1065–1074 shows a compositional bias: basic and acidic residues; it reads PGERVDRTSD. Acidic residues predominate over residues 1075–1085; that stretch reads MEELEADDDSD. 2 stretches are compositionally biased toward polar residues: residues 1095–1114 and 1146–1159; these read PTQT…SSSP and AKNS…MTQE. Residues 1160–1170 show a composition bias toward low complexity; that stretch reads SSDGGDSMDSD. A compositionally biased stretch (polar residues) spans 1194 to 1209; the sequence is PSSSVFSSGQKATPNM.

The protein belongs to the DEAD box helicase family. DEAH subfamily. FANCM sub-subfamily. Interacts with the MHF histone-fold complex to form the FANCM-MHF complex.

Its subcellular location is the nucleus. It carries out the reaction ATP + H2O = ADP + phosphate + H(+). Functionally, ATP-dependent DNA helicase involved in DNA damage repair by homologous recombination and in genome maintenance. Capable of unwinding D-loops. Plays a role in limiting crossover recombinants during mitotic DNA double-strand break (DSB) repair. Component of a FANCM-MHF complex which promotes gene conversion at blocked replication forks, probably by reversal of the stalled fork. The chain is ATP-dependent DNA helicase mph1 from Sclerotinia sclerotiorum (strain ATCC 18683 / 1980 / Ss-1) (White mold).